We begin with the raw amino-acid sequence, 199 residues long: Alpha-D-glucose 1-phosphate phosphatase YihX (199 aa).

Aspartate 6 serves as the catalytic Nucleophile. Aspartate 6 is a binding site for Mg(2+). Substrate is bound by residues 6–8, 107–108, lysine 141, and aspartate 166; these read DLG and SN. Residue aspartate 166 coordinates Mg(2+).

The protein belongs to the HAD-like hydrolase superfamily. YihX family. The cofactor is Mg(2+). It depends on Mn(2+) as a cofactor. Requires Co(2+) as cofactor. Zn(2+) serves as cofactor.

It catalyses the reaction alpha-D-glucose 1-phosphate + H2O = D-glucose + phosphate. Functionally, catalyzes the dephosphorylation of alpha-D-glucose 1-phosphate (Glc1P) and, to a lesser extent, of other sugar phosphates. Has no activity with the beta form of Glc1P. In addition, YihX has significant phosphatase activity against pyridoxal phosphate (PLP) and low beta-phosphoglucomutase activity. This is Alpha-D-glucose 1-phosphate phosphatase YihX (yihX) from Escherichia coli (strain K12).